Reading from the N-terminus, the 237-residue chain is MPESLMDIRVEHKAFAGNTVLHGIDLSLQSGEIVSLLGPSGCGKSTLLRIVAGLEQDFRGSVQRIQGEVAFVFQEPRLMPWLTVAQNIGFSDDDRYDRRWVAQLIEEVGLSGFADALPKALSGGMAQRVAIARGLYSHPAVLLLDEPFSAVDAFTRMKLQDLLLQLAARHAITLLLVTHDVDEALYLSDRVLVMGSRPGTITHQLPVGLQTPRDRRDPLLARLKAQALTELQQAHVI.

Residues 5 to 221 enclose the ABC transporter domain; sequence LMDIRVEHKA…PRDRRDPLLA (217 aa). Residue 38–45 participates in ATP binding; that stretch reads GPSGCGKS.

Belongs to the ABC transporter superfamily. Aliphatic sulfonates importer (TC 3.A.1.17.2) family. In terms of assembly, the complex is composed of two ATP-binding proteins (SsuB), two transmembrane proteins (SsuC) and a solute-binding protein (SsuA).

Its subcellular location is the cell inner membrane. It carries out the reaction ATP + H2O + aliphatic sulfonate-[sulfonate-binding protein]Side 1 = ADP + phosphate + aliphatic sulfonateSide 2 + [sulfonate-binding protein]Side 1.. Functionally, part of the ABC transporter complex SsuABC involved in aliphatic sulfonates import. Responsible for energy coupling to the transport system. In Pseudomonas syringae pv. syringae (strain B728a), this protein is Aliphatic sulfonates import ATP-binding protein SsuB 1.